A 194-amino-acid polypeptide reads, in one-letter code: uncharacterized protein (194 aa).

Residues proline 25–serine 156 are disordered. Over residues glycine 43–glutamine 57 the composition is skewed to polar residues. Low complexity predominate over residues serine 104–leucine 113.

This is an uncharacterized protein from Homo sapiens (Human).